The chain runs to 486 residues: Malonate-semialdehyde dehydrogenase 1 (486 aa).

Residues Phe-154, Lys-178, Glu-181, Arg-182, and Ser-231 each coordinate NAD(+). Catalysis depends on Cys-286, which acts as the Nucleophile. An NAD(+)-binding site is contributed by Glu-386.

This sequence belongs to the aldehyde dehydrogenase family. IolA subfamily. Homotetramer.

It carries out the reaction 3-oxopropanoate + NAD(+) + CoA + H2O = hydrogencarbonate + acetyl-CoA + NADH + H(+). The catalysed reaction is 2-methyl-3-oxopropanoate + NAD(+) + CoA + H2O = propanoyl-CoA + hydrogencarbonate + NADH + H(+). The protein operates within polyol metabolism; myo-inositol degradation into acetyl-CoA; acetyl-CoA from myo-inositol: step 7/7. Functionally, catalyzes the oxidation of malonate semialdehyde (MSA) and methylmalonate semialdehyde (MMSA) into acetyl-CoA and propanoyl-CoA, respectively. Is involved in a myo-inositol catabolic pathway. Bicarbonate, and not CO2, is the end-product of the enzymatic reaction. This Oceanobacillus iheyensis (strain DSM 14371 / CIP 107618 / JCM 11309 / KCTC 3954 / HTE831) protein is Malonate-semialdehyde dehydrogenase 1.